The primary structure comprises 635 residues: Threonine--tRNA ligase (635 aa).

The TGS domain maps to 1-61; the sequence is MTVVRLPDGT…ETDSDLVLIT (61 aa). A catalytic region spans residues 242 to 533; sequence DHRKLGKQLD…LIEHHAGALP (292 aa). Positions 333, 384, and 510 each coordinate Zn(2+).

It belongs to the class-II aminoacyl-tRNA synthetase family. Homodimer. Zn(2+) is required as a cofactor.

It is found in the cytoplasm. It catalyses the reaction tRNA(Thr) + L-threonine + ATP = L-threonyl-tRNA(Thr) + AMP + diphosphate + H(+). In terms of biological role, catalyzes the attachment of threonine to tRNA(Thr) in a two-step reaction: L-threonine is first activated by ATP to form Thr-AMP and then transferred to the acceptor end of tRNA(Thr). Also edits incorrectly charged L-seryl-tRNA(Thr). This Nitrosomonas europaea (strain ATCC 19718 / CIP 103999 / KCTC 2705 / NBRC 14298) protein is Threonine--tRNA ligase.